Here is a 66-residue protein sequence, read N- to C-terminus: Beta-defensin 134 (66 aa).

An N-terminal signal peptide occupies residues 1 to 19; sequence MKPLLVVFVFLFLWDPVLA. Intrachain disulfides connect Cys32-Cys58, Cys38-Cys52, and Cys42-Cys59.

This sequence belongs to the beta-defensin family.

The protein resides in the secreted. Has antibacterial activity. This is Beta-defensin 134 (DEFB134) from Homo sapiens (Human).